A 394-amino-acid chain; its full sequence is Xylose isomerase (394 aa).

Residues His54 and Asp57 contribute to the active site. Mg(2+) contacts are provided by Glu181, Glu217, His220, Asp245, Asp255, Asp257, and Asp292.

It belongs to the xylose isomerase family. In terms of assembly, homotetramer. Mg(2+) is required as a cofactor.

It localises to the cytoplasm. The enzyme catalyses alpha-D-xylose = alpha-D-xylulofuranose. The polypeptide is Xylose isomerase (xylA) (Actinoplanes sp. (strain ATCC 31351 / 3876) (Ampullariella sp.)).